The primary structure comprises 397 residues: Phosphoglycerate kinase (397 aa).

Residues 21-23, arginine 37, 60-63, arginine 119, and arginine 152 each bind substrate; these read DFN and HLGR. ATP contacts are provided by residues lysine 203, glycine 294, glutamate 325, and 354-357; that span reads GGDS.

This sequence belongs to the phosphoglycerate kinase family. As to quaternary structure, monomer.

Its subcellular location is the cytoplasm. The enzyme catalyses (2R)-3-phosphoglycerate + ATP = (2R)-3-phospho-glyceroyl phosphate + ADP. The protein operates within carbohydrate degradation; glycolysis; pyruvate from D-glyceraldehyde 3-phosphate: step 2/5. In Chlorobium limicola (strain DSM 245 / NBRC 103803 / 6330), this protein is Phosphoglycerate kinase.